We begin with the raw amino-acid sequence, 355 residues long: Fe-S cluster assembly protein DRE2 (355 aa).

The tract at residues 23-156 (TSFNPRTLLL…KPDYSASVAV (134 aa)) is N-terminal SAM-like domain. The interval 157–247 (PLRLRRKDNS…EDTLLTEEDM (91 aa)) is linker. Positions 189–214 (RKSVDMTDDVPEKDVPKVDSPKNDAP) are disordered. Residues 190 to 213 (KSVDMTDDVPEKDVPKVDSPKNDA) show a composition bias toward basic and acidic residues. Positions 257, 268, 271, and 273 each coordinate [2Fe-2S] cluster. A fe-S binding site A region spans residues 257–273 (CAPRAGKRRRACKDCTC). Positions 318, 321, 329, and 332 each coordinate [4Fe-4S] cluster. Short sequence motifs (cx2C motif) lie at residues 318–321 (CGNC) and 329–332 (CDGC). Residues 318–332 (CGNCSLGDAFRCDGC) form a fe-S binding site B region.

This sequence belongs to the anamorsin family. Monomer. Interacts with TAH18. Interacts with MIA40. [2Fe-2S] cluster is required as a cofactor. [4Fe-4S] cluster serves as cofactor.

Its subcellular location is the cytoplasm. The protein resides in the mitochondrion intermembrane space. Functionally, component of the cytosolic iron-sulfur (Fe-S) protein assembly (CIA) machinery required for the maturation of extramitochondrial Fe-S proteins. Part of an electron transfer chain functioning in an early step of cytosolic Fe-S biogenesis, facilitating the de novo assembly of a [4Fe-4S] cluster on the scaffold complex CFD1-NBP35. Electrons are transferred to DRE2 from NADPH via the FAD- and FMN-containing protein TAH18. TAH18-DRE2 are also required for the assembly of the diferric tyrosyl radical cofactor of ribonucleotide reductase (RNR), probably by providing electrons for reduction during radical cofactor maturation in the catalytic small subunit RNR2. The protein is Fe-S cluster assembly protein DRE2 of Botryotinia fuckeliana (strain B05.10) (Noble rot fungus).